Reading from the N-terminus, the 883-residue chain is MADKKTVTPEEKKLVAEKHVDELVQKALVALEEMRKLDQEQVDYIVAKASVAALDAHGELALHAFEETGRGVFEDKATKNLFACEHVVNNMRHTKTVGVIEEDDVTGLTLIAEPVGVVCGITPTTNPTSTAIFKSLISLKTRNPIVFAFHPSAQESSAHAARIVRDAAIAAGAPENCVQWITQPSMEATSALMNHEGVATILATGGNAMVKAAYSCGKPALGVGAGNVPAYVEKSANIRQAAHDIVMSKSFDNGMVCASEQAVIIDKEIYDEFVAEFKSYHTYFVNKKEKALLEEFCFGVKANSKNCAGAKLNADIVGKPATWIAEQAGFTVPEGTNILAAECKEVGENEPLTREKLSPVIAVLKSESREDGITKARQMVEFNGLGHSAAIHTADEELTKEFGKAVKAIRVICNSPSTFGGIGDVYNAFLPSLTLGCGSYGRNSVGDNVSAINLLNIKKVGRRRNNMQWMKLPSKTYFERDSIQYLQKCRDVERVMIVTDHAMVELGFLDRIIEQLDLRRNKVVYQIFADVEPDPDITTVNRGTEIMRAFKPDTIIALGGGSPMDAAKVMWLFYEQPEVDFRDLVQKFMDIRKRAFKFPLLGKKTKFIAIPTTSGTGSEVTPFAVISDKANNRKYPIADYSLTPTVAIVDPALVLTVPGFVAADTGMDVLTHATEAYVSQMASDYTDGLALQAIKLVFENLESSVKNADFHSREKMHNASTIAGMAFANAFLGISHSMAHKIGAQFHTIHGRTNAILLPYVIRYNGTRPAKTATWPKYNYYRADEKYQDIARMLGLPASTPEEGVESYAKAVYELGERIGIQMNFRDQGIDEKEWKEHSRKLAFLAYEDQCSPANPRLPMVDHMQEIIEDAYYGYKERPGRRK.

Positions 13–456 (KLVAEKHVDE…DNVSAINLLN (444 aa)) are aldehyde dehydrogenase. NAD(+) contacts are provided by residues 121-126 (ITPTTN), G206, and G224. C257 functions as the Nucleophile in the catalytic mechanism. NAD(+)-binding positions include E355, L435, and 438–443 (GSYGRN). Residues 457-464 (IKKVGRRR) are linker. Residues D500, D534, 561 to 565 (GSPMD), 612 to 613 (TT), V625, K634, and L653 each bind NAD(+). Residues D668, H672, H736, and H750 each contribute to the Fe cation site.

In the N-terminal section; belongs to the aldehyde dehydrogenase family. It in the C-terminal section; belongs to the iron-containing alcohol dehydrogenase family. Fe(2+) is required as a cofactor.

It catalyses the reaction ethanol + NAD(+) = acetaldehyde + NADH + H(+). The enzyme catalyses an aldehyde + NAD(+) + H2O = a carboxylate + NADH + 2 H(+). In terms of biological role, has alcohol dehydrogenase activity. Has aldehyde dehydrogenase activity. May play a role in enhancing virulence in mice. May be considered a potential virulence factor. The sequence is that of Aldehyde-alcohol dehydrogenase from Streptococcus pneumoniae serotype 4 (strain ATCC BAA-334 / TIGR4).